A 405-amino-acid chain; its full sequence is FK506-binding protein 4 (405 aa).

2 disordered regions span residues 49–117 (THNP…EDEL) and 164–297 (QQDE…PQKK). Acidic residues-rich tracts occupy residues 59 to 84 (ESDD…EMEV), 98 to 117 (VEEE…EDEL), and 165 to 201 (QDED…EEEA). 2 stretches are compositionally biased toward basic and acidic residues: residues 238–252 (RKAE…EDAA) and 265–276 (AKVEGEKAEEKP). Positions 319–405 (GKRLGMRYIG…KFDVKLVSIN (87 aa)) constitute a PPIase FKBP-type domain.

This sequence belongs to the FKBP-type PPIase family. FKBP3/4 subfamily. In terms of assembly, binds to histones H3 and H4.

It localises to the nucleus. It carries out the reaction [protein]-peptidylproline (omega=180) = [protein]-peptidylproline (omega=0). With respect to regulation, inhibited by both FK506 and rapamycin. PPIase that acts as a histone chaperone. Histone proline isomerase that increases the rate of cis-trans isomerization at prolines on the histone H3 N-terminal tail. Proline isomerization influences H3 methylation thereby regulating gene expression. The sequence is that of FK506-binding protein 4 (FPR4) from Cryptococcus neoformans var. neoformans serotype D (strain B-3501A) (Filobasidiella neoformans).